The primary structure comprises 555 residues: MPIAGTKYAPFPAPQLDDRTWPSKRIEKAPIWCSVDLRDGNQALIDPMGHDRKERMFRLLIDMGFPEIEIGFPSASQTDFDFCRWAIEQGDVPDDVDLQVLVQCRPELITRTFEALEGAKTPIIHFYNSTSELQRRVVFAKDVGGIKQIATDAAKMIMDMAAKAGGGYRFQYSPESFTGTELDVALEICNAVIEIVKPTPDNKLIVNLPSTVEMNTPNVYADQIEWMCRNLDNRESLIISLHPHNDRGTGIAATELGLMAGADRVEGTLFGNGERTGNVDVVTLALNMYTQGIDPGLDCTDINRMKEVYEYSNQLKIAERHPYVGELVYTAFSGSHQDAINKGMKARRSANSPVWEVPYLPIDPQDVGRSYEAIIRINSQSGKGGIAYILQADYGLNLPRNLQVEFREIIQHITDEEGKELPSKRIYEEFQKLYVTQPDARIKFVDHHTYPDPEQKGRRILTAEITDNGVTKTIEGKGTGPIDGFVDALSKYLGVKMSVVDYSEHSLQQGSDASAISYVEMVYPGGKLFGVGINDNIVSASLEAVVSAANRVIAK.

The region spanning 30–303 (PIWCSVDLRD…DPGLDCTDIN (274 aa)) is the Pyruvate carboxyltransferase domain. Aspartate 39, histidine 242, histidine 244, and asparagine 278 together coordinate Mg(2+). A regulatory domain region spans residues 437–555 (QPDARIKFVD…VSAANRVIAK (119 aa)).

It belongs to the alpha-IPM synthase/homocitrate synthase family. LeuA type 2 subfamily. Homodimer. Mg(2+) serves as cofactor.

The protein localises to the cytoplasm. It catalyses the reaction 3-methyl-2-oxobutanoate + acetyl-CoA + H2O = (2S)-2-isopropylmalate + CoA + H(+). It functions in the pathway amino-acid biosynthesis; L-leucine biosynthesis; L-leucine from 3-methyl-2-oxobutanoate: step 1/4. Its function is as follows. Catalyzes the condensation of the acetyl group of acetyl-CoA with 3-methyl-2-oxobutanoate (2-ketoisovalerate) to form 3-carboxy-3-hydroxy-4-methylpentanoate (2-isopropylmalate). The protein is 2-isopropylmalate synthase of Brucella suis biovar 1 (strain 1330).